Reading from the N-terminus, the 611-residue chain is Dihydroxy-acid dehydratase (611 aa).

A Mg(2+)-binding site is contributed by Asp81. Cys122 is a binding site for [2Fe-2S] cluster. The Mg(2+) site is built by Asp123 and Lys124. Lys124 bears the N6-carboxylysine mark. A [2Fe-2S] cluster-binding site is contributed by Cys195. Glu491 provides a ligand contact to Mg(2+). The active-site Proton acceptor is Ser517.

The protein belongs to the IlvD/Edd family. Homodimer. It depends on [2Fe-2S] cluster as a cofactor. Mg(2+) serves as cofactor.

The enzyme catalyses (2R)-2,3-dihydroxy-3-methylbutanoate = 3-methyl-2-oxobutanoate + H2O. It carries out the reaction (2R,3R)-2,3-dihydroxy-3-methylpentanoate = (S)-3-methyl-2-oxopentanoate + H2O. Its pathway is amino-acid biosynthesis; L-isoleucine biosynthesis; L-isoleucine from 2-oxobutanoate: step 3/4. It functions in the pathway amino-acid biosynthesis; L-valine biosynthesis; L-valine from pyruvate: step 3/4. In terms of biological role, functions in the biosynthesis of branched-chain amino acids. Catalyzes the dehydration of (2R,3R)-2,3-dihydroxy-3-methylpentanoate (2,3-dihydroxy-3-methylvalerate) into 2-oxo-3-methylpentanoate (2-oxo-3-methylvalerate) and of (2R)-2,3-dihydroxy-3-methylbutanoate (2,3-dihydroxyisovalerate) into 2-oxo-3-methylbutanoate (2-oxoisovalerate), the penultimate precursor to L-isoleucine and L-valine, respectively. In Actinobacillus pleuropneumoniae serotype 3 (strain JL03), this protein is Dihydroxy-acid dehydratase.